A 78-amino-acid polypeptide reads, in one-letter code: Surfactant-associated protein 2 (78 aa).

The N-terminal stretch at 1–19 is a signal peptide; the sequence is MGSGLPLVLLLTLLGSSHG. Asn-37 carries an N-linked (GlcNAc...) asparagine glycan.

In terms of processing, N-glycosylated. As to expression, predominantly expressed in lung, where it is detected in type II pneumocytes in the alveolus, and in nonciliated epithelium in bronchioli (at protein level). Also detected at lower levels in cervix, esophagus, stomach, testis and kidney.

It is found in the secreted. The protein localises to the cytoplasmic vesicle. Its subcellular location is the secretory vesicle. The protein resides in the golgi apparatus. In terms of biological role, putative surfactant protein. The chain is Surfactant-associated protein 2 (SFTA2) from Homo sapiens (Human).